The following is a 220-amino-acid chain: CASP-like protein 4B1 (220 aa).

The Cytoplasmic portion of the chain corresponds to 1-74 (MAMVTTEAAA…RWRREDMLDK (74 aa)). Positions 13–56 (TTAATAAAEKPQDVEKPDYAPYNGASTTADGGTGARARRGDGGG) are disordered. A helical membrane pass occupies residues 75-95 (SPLALHAAAAIFAFVALVLVA). Over 96–109 (SNQHGDWMQFDRYQ) the chain is Extracellular. Residues 110–127 (EYRYLLAIASLALLYSLA) traverse the membrane as a helical segment. The Cytoplasmic segment spans residues 128 to 152 (QAARHAHRMRGGVDPVSSASARLLD). The chain crosses the membrane as a helical span at residues 153–173 (FVGDQVVAYLLMSALSAAVPI). Residues 174 to 188 (TNRMRSAVVNNFTDA) are Extracellular-facing. Asparagine 184 is a glycosylation site (N-linked (GlcNAc...) asparagine). Residues 189–209 (TAAAISMAFFSFVALALSAVV) form a helical membrane-spanning segment. The Cytoplasmic segment spans residues 210–220 (SGYKLSKQTYM).

This sequence belongs to the Casparian strip membrane proteins (CASP) family. As to quaternary structure, homodimer and heterodimers.

The protein resides in the cell membrane. The protein is CASP-like protein 4B1 of Sorghum bicolor (Sorghum).